The sequence spans 520 residues: Transactivator/viroplasmin protein (520 aa).

Residues 487–520 (QDASADSGPKDGPPPTRSIVEKEDVPTTSSKQVD) are disordered.

This sequence belongs to the caulimoviridae viroplasmin family.

It is found in the host cytoplasm. Enhances the ribosomal termination-reinitiation event leading to the translation of major open reading frames on the polycistronic viral RNAs. The protein is Transactivator/viroplasmin protein of Cauliflower mosaic virus (strain CM-1841) (CaMV).